The sequence spans 392 residues: Succinate--CoA ligase [ADP-forming] subunit beta (392 aa).

In terms of domain architecture, ATP-grasp spans 9-236; sequence RDLFERHGLP…QAAVDPLEQA (228 aa). ATP-binding positions include lysine 45, 52-54, alanine 94, and glutamate 99; that span reads GRG. Mg(2+)-binding residues include asparagine 191 and aspartate 205. Substrate contacts are provided by residues asparagine 256 and 318–320; that span reads GIT.

This sequence belongs to the succinate/malate CoA ligase beta subunit family. In terms of assembly, heterotetramer of two alpha and two beta subunits. It depends on Mg(2+) as a cofactor.

The enzyme catalyses succinate + ATP + CoA = succinyl-CoA + ADP + phosphate. The catalysed reaction is GTP + succinate + CoA = succinyl-CoA + GDP + phosphate. It participates in carbohydrate metabolism; tricarboxylic acid cycle; succinate from succinyl-CoA (ligase route): step 1/1. In terms of biological role, succinyl-CoA synthetase functions in the citric acid cycle (TCA), coupling the hydrolysis of succinyl-CoA to the synthesis of either ATP or GTP and thus represents the only step of substrate-level phosphorylation in the TCA. The beta subunit provides nucleotide specificity of the enzyme and binds the substrate succinate, while the binding sites for coenzyme A and phosphate are found in the alpha subunit. This Salinispora tropica (strain ATCC BAA-916 / DSM 44818 / JCM 13857 / NBRC 105044 / CNB-440) protein is Succinate--CoA ligase [ADP-forming] subunit beta.